The following is a 203-amino-acid chain: MKQKLDRLLVQADIQLTERQKEQLIGFVHLLHKWNKAYNLTSVRDPEEMLVKHIMDSLVVSVHLQGQSFIDVGTGPGLPGIPLAIANPDKQFVLLDSLGKRITFIKQVLRELAITNVTPVLSRVEQYTARQFDGVLSRAFASLDDMLNWCYALPNDSGKFYALKGVYDGTELQAVQKPIKLVDAIKLNVPQLVGERHLIVLAK.

Residues G73, L78, 124-125 (VE), and R138 contribute to the S-adenosyl-L-methionine site.

Belongs to the methyltransferase superfamily. RNA methyltransferase RsmG family.

The protein localises to the cytoplasm. The catalysed reaction is guanosine(527) in 16S rRNA + S-adenosyl-L-methionine = N(7)-methylguanosine(527) in 16S rRNA + S-adenosyl-L-homocysteine. In terms of biological role, specifically methylates the N7 position of guanine in position 527 of 16S rRNA. The polypeptide is Ribosomal RNA small subunit methyltransferase G (Haemophilus ducreyi (strain 35000HP / ATCC 700724)).